The primary structure comprises 908 residues: DNA polymerase I (908 aa).

A 5'-3' exonuclease domain is found at 1–318 (MKELYLIDAL…DDINTIDTEN (318 aa)). Residues 319-531 (VKYRSITTKI…MEENGIYLDK (213 aa)) enclose the 3'-5' exonuclease domain. Residues 532 to 908 (EYLKEYGKEL…ETGKSWGEIH (377 aa)) form a polymerase region.

Belongs to the DNA polymerase type-A family.

The enzyme catalyses DNA(n) + a 2'-deoxyribonucleoside 5'-triphosphate = DNA(n+1) + diphosphate. In terms of biological role, in addition to polymerase activity, this DNA polymerase exhibits 3'-5' and 5'-3' exonuclease activity. In Borreliella burgdorferi (strain ATCC 35210 / DSM 4680 / CIP 102532 / B31) (Borrelia burgdorferi), this protein is DNA polymerase I (polA).